Consider the following 202-residue polypeptide: Oligoribonuclease (202 aa).

The Exonuclease domain maps to 2-166 (LVWIDCEMTG…ADIQESIEEL (165 aa)). Tyr123 is an active-site residue.

It belongs to the oligoribonuclease family.

It localises to the cytoplasm. Its function is as follows. 3'-to-5' exoribonuclease specific for small oligoribonucleotides. This chain is Oligoribonuclease, found in Cutibacterium acnes (strain DSM 16379 / KPA171202) (Propionibacterium acnes).